The following is a 485-amino-acid chain: Ribosomal protein uS12 methylthiotransferase RimO (485 aa).

Positions 37–147 (SRIGFVSLGC…VVEQVHEHLP (111 aa)) constitute an MTTase N-terminal domain. Positions 46, 82, 111, 179, 183, and 186 each coordinate [4Fe-4S] cluster. Residues 165 to 402 (LTPRHYAYLK…MEVQGEISAA (238 aa)) enclose the Radical SAM core domain. Residues 405-471 (KARIGNEYQV…EHDVWAVLSE (67 aa)) form the TRAM domain.

The protein belongs to the methylthiotransferase family. RimO subfamily. The cofactor is [4Fe-4S] cluster.

Its subcellular location is the cytoplasm. It carries out the reaction L-aspartate(89)-[ribosomal protein uS12]-hydrogen + (sulfur carrier)-SH + AH2 + 2 S-adenosyl-L-methionine = 3-methylsulfanyl-L-aspartate(89)-[ribosomal protein uS12]-hydrogen + (sulfur carrier)-H + 5'-deoxyadenosine + L-methionine + A + S-adenosyl-L-homocysteine + 2 H(+). Its function is as follows. Catalyzes the methylthiolation of an aspartic acid residue of ribosomal protein uS12. The sequence is that of Ribosomal protein uS12 methylthiotransferase RimO from Alteromonas mediterranea (strain DSM 17117 / CIP 110805 / LMG 28347 / Deep ecotype).